A 491-amino-acid polypeptide reads, in one-letter code: Cobyric acid synthase (491 aa).

One can recognise a GATase cobBQ-type domain in the interval 251–444 (GITIAVIRLP…LHGLFTNDEF (194 aa)). Cys-329 functions as the Nucleophile in the catalytic mechanism. Residue His-436 is part of the active site.

The protein belongs to the CobB/CobQ family. CobQ subfamily.

Its pathway is cofactor biosynthesis; adenosylcobalamin biosynthesis. Catalyzes amidations at positions B, D, E, and G on adenosylcobyrinic A,C-diamide. NH(2) groups are provided by glutamine, and one molecule of ATP is hydrogenolyzed for each amidation. This is Cobyric acid synthase from Chloroflexus aggregans (strain MD-66 / DSM 9485).